The chain runs to 89 residues: Cell division topological specificity factor (89 aa).

It belongs to the MinE family.

Functionally, prevents the cell division inhibition by proteins MinC and MinD at internal division sites while permitting inhibition at polar sites. This ensures cell division at the proper site by restricting the formation of a division septum at the midpoint of the long axis of the cell. This Yersinia pestis bv. Antiqua (strain Angola) protein is Cell division topological specificity factor.